We begin with the raw amino-acid sequence, 347 residues long: MIQVFIVDDSAVVRQVLTQILNKDPEIEIIGFASDPIFASEKLSSVWPDVFILDIEMPRMDGISFLKKIMSEKPTPVIICSSLAEKESETAVLAMKLGAVDIIEKPKVGLKNFLEESEILFIDSVRAASNARVKTHSFQNDDSKFLENHKQPKTDFSKIDTTDKLIAIGTSTGGTQALEFILTQLNIHCPGIVIVQHMPEKFTEAFANRLNQVCKIQVKEAKDGDRVQLGSAYIAPGNKHMEIYLSGAQFHIRVLDGPLVNRHRPSVDTLFHSVAKAAGKNAKGIIMTGMGNDGANGLLKMKQSGAHTIAQDEASCVVFGMPKEAILKGAVNTILPLSKIVGEVQYF.

The region spanning glutamine 3–leucine 120 is the Response regulatory domain. Aspartate 54 carries the post-translational modification 4-aspartylphosphate. One can recognise a CheB-type methylesterase domain in the interval isoleucine 159–phenylalanine 347. Catalysis depends on residues serine 171, histidine 197, and aspartate 293.

Belongs to the CheB family. Post-translationally, phosphorylated by CheA. Phosphorylation of the N-terminal regulatory domain activates the methylesterase activity.

It is found in the cytoplasm. It carries out the reaction [protein]-L-glutamate 5-O-methyl ester + H2O = L-glutamyl-[protein] + methanol + H(+). The enzyme catalyses L-glutaminyl-[protein] + H2O = L-glutamyl-[protein] + NH4(+). Involved in chemotaxis. Part of a chemotaxis signal transduction system that modulates chemotaxis in response to various stimuli. Catalyzes the demethylation of specific methylglutamate residues introduced into the chemoreceptors (methyl-accepting chemotaxis proteins or MCP) by CheR. Also mediates the irreversible deamidation of specific glutamine residues to glutamic acid. The chain is Protein-glutamate methylesterase/protein-glutamine glutaminase 3 from Leptospira interrogans serogroup Icterohaemorrhagiae serovar copenhageni (strain Fiocruz L1-130).